The primary structure comprises 779 residues: Pleckstrin homology domain-containing family A member 4 (779 aa).

The 100-residue stretch at 54 to 153 (PVHIRGWLHK…WLRALGKASR (100 aa)) folds into the PH domain. Disordered regions lie at residues 152 to 355 (SRAE…LPGP), 495 to 669 (AGLG…SGGH), and 694 to 766 (SPER…QEEG). S164 is modified (phosphoserine). Residues 183–193 (VNRREEGRTSE) show a composition bias toward basic and acidic residues. Composition is skewed to low complexity over residues 246-259 (PRPR…PPLS) and 324-334 (QSTQVSSGSST). Residues 517–527 (QREESSERESL) show a composition bias toward basic and acidic residues. The span at 528 to 540 (SESLELSSPQSPE) shows a compositional bias: low complexity. Position 562 is a phosphoserine (S562). Over residues 567–580 (RASSPECRQQSSPL) the composition is skewed to polar residues. 2 stretches are compositionally biased toward low complexity: residues 608-627 (GLSL…RTLS) and 649-659 (SSGSWSSPRHS). Polar residues predominate over residues 720–740 (VTSSPTSHKANSATTGFSCQG).

The protein resides in the cytoplasm. Its subcellular location is the membrane. In terms of biological role, binds specifically to phosphatidylinositol 3-phosphate (PtdIns3P), but not to other phosphoinositides. The protein is Pleckstrin homology domain-containing family A member 4 (Plekha4) of Rattus norvegicus (Rat).